Reading from the N-terminus, the 681-residue chain is DNA ligase (681 aa).

Residues 42 to 46, 91 to 92, and glutamate 120 each bind NAD(+); these read DAEYD and SL. Lysine 122 (N6-AMP-lysine intermediate) is an active-site residue. NAD(+) is bound by residues arginine 143, glutamate 180, lysine 302, and lysine 326. Zn(2+)-binding residues include cysteine 420, cysteine 423, cysteine 438, and cysteine 444. Positions 603–681 constitute a BRCT domain; that stretch reads ADAQPLLGQT…EAGLIELIGL (79 aa).

Belongs to the NAD-dependent DNA ligase family. LigA subfamily. Mg(2+) serves as cofactor. Requires Mn(2+) as cofactor.

It carries out the reaction NAD(+) + (deoxyribonucleotide)n-3'-hydroxyl + 5'-phospho-(deoxyribonucleotide)m = (deoxyribonucleotide)n+m + AMP + beta-nicotinamide D-nucleotide.. In terms of biological role, DNA ligase that catalyzes the formation of phosphodiester linkages between 5'-phosphoryl and 3'-hydroxyl groups in double-stranded DNA using NAD as a coenzyme and as the energy source for the reaction. It is essential for DNA replication and repair of damaged DNA. This is DNA ligase from Shewanella amazonensis (strain ATCC BAA-1098 / SB2B).